The chain runs to 230 residues: Ion-translocating oxidoreductase complex subunit E (230 aa).

The next 6 membrane-spanning stretches (helical) occupy residues 18–38 (ALVQLLGLCPLLAVTSTATNA), 39–59 (LGLGLATTLVLTLTNLTVSAL), 63–83 (TPAEIRIPIYVMIIASVVSAV), 86–106 (LINAYAFGLYQSLGIFIPLIV), 125–145 (WLSALDGFSIGMGATGAMFVL), and 182–202 (PFLLAMLPPGAFIGLGLMLAV).

This sequence belongs to the NqrDE/RnfAE family. As to quaternary structure, the complex is composed of six subunits: RsxA, RsxB, RsxC, RsxD, RsxE and RsxG.

It localises to the cell inner membrane. Functionally, part of a membrane-bound complex that couples electron transfer with translocation of ions across the membrane. Required to maintain the reduced state of SoxR. The sequence is that of Ion-translocating oxidoreductase complex subunit E from Salmonella arizonae (strain ATCC BAA-731 / CDC346-86 / RSK2980).